The sequence spans 156 residues: Small ribosomal subunit protein uS7 (156 aa).

This sequence belongs to the universal ribosomal protein uS7 family. In terms of assembly, part of the 30S ribosomal subunit. Contacts proteins S9 and S11.

One of the primary rRNA binding proteins, it binds directly to 16S rRNA where it nucleates assembly of the head domain of the 30S subunit. Is located at the subunit interface close to the decoding center, probably blocks exit of the E-site tRNA. The protein is Small ribosomal subunit protein uS7 of Prochlorococcus marinus (strain SARG / CCMP1375 / SS120).